We begin with the raw amino-acid sequence, 384 residues long: Lipoyl synthase 2, chloroplastic (384 aa).

The N-terminal 48 residues, 1–48, are a transit peptide targeting the chloroplast; sequence MAAYCSRVYHHHPVSPSTMQGSLARPSIHAGSASLTFRARPNSVSIVR. Cys108, Cys113, Cys119, Cys145, Cys149, Cys152, and Ser360 together coordinate [4Fe-4S] cluster. The Radical SAM core domain maps to 128-349; that stretch reads GDGDGIATAT…KEYGESLGFL (222 aa).

The protein belongs to the radical SAM superfamily. Lipoyl synthase family. Requires [4Fe-4S] cluster as cofactor.

It localises to the plastid. The protein resides in the chloroplast. The catalysed reaction is [[Fe-S] cluster scaffold protein carrying a second [4Fe-4S](2+) cluster] + N(6)-octanoyl-L-lysyl-[protein] + 2 oxidized [2Fe-2S]-[ferredoxin] + 2 S-adenosyl-L-methionine + 4 H(+) = [[Fe-S] cluster scaffold protein] + N(6)-[(R)-dihydrolipoyl]-L-lysyl-[protein] + 4 Fe(3+) + 2 hydrogen sulfide + 2 5'-deoxyadenosine + 2 L-methionine + 2 reduced [2Fe-2S]-[ferredoxin]. The protein operates within protein modification; protein lipoylation via endogenous pathway; protein N(6)-(lipoyl)lysine from octanoyl-[acyl-carrier-protein]: step 2/2. Functionally, catalyzes the radical-mediated insertion of two sulfur atoms into the C-6 and C-8 positions of the octanoyl moiety bound to the lipoyl domains of lipoate-dependent enzymes, thereby converting the octanoylated domains into lipoylated derivatives. The chain is Lipoyl synthase 2, chloroplastic from Oryza sativa subsp. indica (Rice).